Here is a 469-residue protein sequence, read N- to C-terminus: MESLNGCVLSQLRQSGAQVTRTLQKIQSRSYSAPVSGSIPAAKKKYVPTSGTYPLGFSASGINVGVKPKNTTKPDVCLVASDRPCAAAAVFTKNKFQAAPVTFSRSLLQKKGNQGIQGVVVNSGCANAVTGKGGLEDAGKMAQAADECFGQSESTLVMSTGVIGQRLPIEKITSNIPRAHKAMGSTHDHWLTAAKAICTTDTFPKLISRSFKLPSSPSVEYRIAGMTKGAGMIHPNMATLLGIIATDAPVSSTVLPAVLKHAVDRSFNSITIDGDTSTNDTVALLANGAAGGKEVVANTPDYDAFQTVLTDFSTDLAKLIVRDGEGATKFVTIRVVEAASEEAARKIASTIARSPLVKTALYGKDANWGRILCATGYSLVSEPGLPVNDVSEVVPEKTNVSFIPTDGTAELKLLVNGEPEQVDEARAAEILELEDLEILVRLGTGDKQATYWTCDYSHEYITINGDYRT.

6 residues coordinate substrate: Thr199, Lys228, Thr239, Glu325, Asn464, and Thr469. Catalysis depends on Thr239, which acts as the Nucleophile.

The protein belongs to the ArgJ family. As to quaternary structure, heterodimer of an alpha and a beta chain. Post-translationally, the alpha and beta chains are autoproteolytically processed from a single precursor protein within the mitochondrion.

It is found in the mitochondrion matrix. It carries out the reaction N(2)-acetyl-L-ornithine + L-glutamate = N-acetyl-L-glutamate + L-ornithine. It catalyses the reaction L-glutamate + acetyl-CoA = N-acetyl-L-glutamate + CoA + H(+). Its pathway is amino-acid biosynthesis; L-arginine biosynthesis; L-ornithine and N-acetyl-L-glutamate from L-glutamate and N(2)-acetyl-L-ornithine (cyclic): step 1/1. It functions in the pathway amino-acid biosynthesis; L-arginine biosynthesis; N(2)-acetyl-L-ornithine from L-glutamate: step 1/4. Catalyzes two activities which are involved in the cyclic version of arginine biosynthesis: the synthesis of acetylglutamate from glutamate and acetyl-CoA, and of ornithine by transacetylation between acetylornithine and glutamate. The chain is Arginine biosynthesis bifunctional protein ArgJ, mitochondrial from Neurospora crassa (strain ATCC 24698 / 74-OR23-1A / CBS 708.71 / DSM 1257 / FGSC 987).